We begin with the raw amino-acid sequence, 214 residues long: Thymidylate kinase (214 aa).

10–17 (GGEGAGKS) serves as a coordination point for ATP.

It belongs to the thymidylate kinase family.

It catalyses the reaction dTMP + ATP = dTDP + ADP. Phosphorylation of dTMP to form dTDP in both de novo and salvage pathways of dTTP synthesis. The chain is Thymidylate kinase from Brucella suis biovar 1 (strain 1330).